Here is a 211-residue protein sequence, read N- to C-terminus: Arginine exporter protein ArgO (211 aa).

Residues 1–38 (MFSYYFQGLALGAAMILPLGPQNAFVMNQGIRRQYHIM) are Cytoplasmic-facing. The helical transmembrane segment at 39-58 (IALLCAISDLVLICAGIFGG) threads the bilayer. Residues 59-63 (SALLM) are Periplasmic-facing. The chain crosses the membrane as a helical span at residues 64 to 91 (QSPWLLALVTWGGVAFLLWYGFGAFKTA). At 92–102 (MSSNIELASAE) the chain is on the cytoplasmic side. A helical membrane pass occupies residues 103–130 (VMKQGRWKIIATMLAVTWLNPHVYLDTF). The Periplasmic portion of the chain corresponds to 131–140 (VVLGSLGGQL). A helical membrane pass occupies residues 141–170 (DVEPKRWFALGTISASFLWFFGLALLAAWL). Topologically, residues 171–173 (APR) are cytoplasmic. The chain crosses the membrane as a helical span at residues 174–200 (LRTAKAQRIINLVVGCVMWFIALQLAR). Residues 201–211 (DGIAHAQALFS) are Periplasmic-facing.

It belongs to the LysE/ArgO transporter (TC 2.A.75) family. Monomer.

Its subcellular location is the cell inner membrane. The catalysed reaction is L-arginine(in) = L-arginine(out). Involved in the export of arginine. Important to control the intracellular level of arginine and the correct balance between arginine and lysine. May also be involved in the export of canavanine (a plant-derived antimetabolite). This is Arginine exporter protein ArgO from Escherichia coli (strain K12).